A 225-amino-acid polypeptide reads, in one-letter code: Endonuclease V (225 aa).

Positions 43 and 110 each coordinate Mg(2+).

Belongs to the endonuclease V family. Mg(2+) serves as cofactor.

The protein resides in the cytoplasm. The enzyme catalyses Endonucleolytic cleavage at apurinic or apyrimidinic sites to products with a 5'-phosphate.. DNA repair enzyme involved in the repair of deaminated bases. Selectively cleaves double-stranded DNA at the second phosphodiester bond 3' to a deoxyinosine leaving behind the intact lesion on the nicked DNA. The sequence is that of Endonuclease V from Thermotoga petrophila (strain ATCC BAA-488 / DSM 13995 / JCM 10881 / RKU-1).